The sequence spans 257 residues: tRNA-cytidine(32) 2-sulfurtransferase (257 aa).

Residues 37–42 carry the PP-loop motif motif; it reads SGGKDS. Cysteine 112, cysteine 115, and cysteine 202 together coordinate [4Fe-4S] cluster.

This sequence belongs to the TtcA family. As to quaternary structure, homodimer. Requires Mg(2+) as cofactor. [4Fe-4S] cluster is required as a cofactor.

The protein localises to the cytoplasm. It carries out the reaction cytidine(32) in tRNA + S-sulfanyl-L-cysteinyl-[cysteine desulfurase] + AH2 + ATP = 2-thiocytidine(32) in tRNA + L-cysteinyl-[cysteine desulfurase] + A + AMP + diphosphate + H(+). Its pathway is tRNA modification. Catalyzes the ATP-dependent 2-thiolation of cytidine in position 32 of tRNA, to form 2-thiocytidine (s(2)C32). The sulfur atoms are provided by the cysteine/cysteine desulfurase (IscS) system. This is tRNA-cytidine(32) 2-sulfurtransferase from Geobacter metallireducens (strain ATCC 53774 / DSM 7210 / GS-15).